A 184-amino-acid chain; its full sequence is dCTP deaminase (184 aa).

DCTP-binding positions include 107-112 (KSTYAR), 131-133 (TLE), Gln152, Tyr166, and Gln176. The active-site Proton donor/acceptor is Glu133.

The protein belongs to the dCTP deaminase family. As to quaternary structure, homotrimer.

It carries out the reaction dCTP + H2O + H(+) = dUTP + NH4(+). The protein operates within pyrimidine metabolism; dUMP biosynthesis; dUMP from dCTP (dUTP route): step 1/2. Catalyzes the deamination of dCTP to dUTP. The sequence is that of dCTP deaminase from Rhizorhabdus wittichii (strain DSM 6014 / CCUG 31198 / JCM 15750 / NBRC 105917 / EY 4224 / RW1) (Sphingomonas wittichii).